Consider the following 855-residue polypeptide: Sucrose synthase 5 (855 aa).

Residues 279 to 758 (SIFNIVIFSI…GLQRICECYT (480 aa)) are GT-B glycosyltransferase.

The protein belongs to the glycosyltransferase 1 family. Plant sucrose synthase subfamily. As to expression, predominantly expressed in roots, flowers and immature seeds.

The protein resides in the cytoplasm. It is found in the membrane. The catalysed reaction is an NDP-alpha-D-glucose + D-fructose = a ribonucleoside 5'-diphosphate + sucrose + H(+). Sucrose-cleaving enzyme that provides UDP-glucose and fructose for various metabolic pathways. The chain is Sucrose synthase 5 (SUS5) from Oryza sativa subsp. japonica (Rice).